Consider the following 418-residue polypeptide: D-amino acid dehydrogenase (418 aa).

3–17 lines the FAD pocket; that stretch reads VTILGAGVVGVTSAW.

The protein belongs to the DadA oxidoreductase family. It depends on FAD as a cofactor.

It catalyses the reaction a D-alpha-amino acid + A + H2O = a 2-oxocarboxylate + AH2 + NH4(+). The protein operates within amino-acid degradation; D-alanine degradation; NH(3) and pyruvate from D-alanine: step 1/1. In terms of biological role, oxidative deamination of D-amino acids. The protein is D-amino acid dehydrogenase of Agrobacterium fabrum (strain C58 / ATCC 33970) (Agrobacterium tumefaciens (strain C58)).